We begin with the raw amino-acid sequence, 402 residues long: Exodeoxyribonuclease 7 large subunit (402 aa).

It belongs to the XseA family. In terms of assembly, heterooligomer composed of large and small subunits.

It localises to the cytoplasm. The catalysed reaction is Exonucleolytic cleavage in either 5'- to 3'- or 3'- to 5'-direction to yield nucleoside 5'-phosphates.. Its function is as follows. Bidirectionally degrades single-stranded DNA into large acid-insoluble oligonucleotides, which are then degraded further into small acid-soluble oligonucleotides. The polypeptide is Exodeoxyribonuclease 7 large subunit (Streptomyces coelicolor (strain ATCC BAA-471 / A3(2) / M145)).